A 292-amino-acid chain; its full sequence is 4-hydroxy-tetrahydrodipicolinate synthase (292 aa).

Threonine 45 contacts pyruvate. Catalysis depends on tyrosine 133, which acts as the Proton donor/acceptor. Lysine 161 functions as the Schiff-base intermediate with substrate in the catalytic mechanism. Isoleucine 203 provides a ligand contact to pyruvate.

This sequence belongs to the DapA family. As to quaternary structure, homotetramer; dimer of dimers.

It is found in the cytoplasm. It catalyses the reaction L-aspartate 4-semialdehyde + pyruvate = (2S,4S)-4-hydroxy-2,3,4,5-tetrahydrodipicolinate + H2O + H(+). Its pathway is amino-acid biosynthesis; L-lysine biosynthesis via DAP pathway; (S)-tetrahydrodipicolinate from L-aspartate: step 3/4. Its function is as follows. Catalyzes the condensation of (S)-aspartate-beta-semialdehyde [(S)-ASA] and pyruvate to 4-hydroxy-tetrahydrodipicolinate (HTPA). This is 4-hydroxy-tetrahydrodipicolinate synthase from Shigella boydii serotype 18 (strain CDC 3083-94 / BS512).